The sequence spans 461 residues: Elongation factor 1-alpha, oocyte form (461 aa).

Gly2 carries the post-translational modification N,N,N-trimethylglycine. Positions 5–242 constitute a tr-type G domain; sequence KIHINIVVIG…DCIIPPQRPT (238 aa). Residues 14-21 form a G1 region; the sequence is GHVDSGKS. Residue 14–21 participates in GTP binding; sequence GHVDSGKS. The segment at 70 to 74 is G2; that stretch reads GITID. Residues 91–94 are G3; sequence DAPG. GTP contacts are provided by residues 91 to 95 and 153 to 156; these read DAPGH and NKMD. Residues 153–156 form a G4 region; that stretch reads NKMD. The segment at 194-196 is G5; sequence SGW. 2 positions are modified to 5-glutamyl glycerylphosphorylethanolamine: Glu301 and Glu374.

Belongs to the TRAFAC class translation factor GTPase superfamily. Classic translation factor GTPase family. EF-Tu/EF-1A subfamily. In terms of tissue distribution, oocyte.

It is found in the cytoplasm. This protein promotes the GTP-dependent binding of aminoacyl-tRNA to the A-site of ribosomes during protein biosynthesis. The sequence is that of Elongation factor 1-alpha, oocyte form (eef1ao) from Xenopus laevis (African clawed frog).